We begin with the raw amino-acid sequence, 488 residues long: Kelch-like protein 15 (488 aa).

Positions 31–98 (LDVTLVIEDH…MYYGTIELSM (68 aa)) constitute a BTB domain. A BACK domain is found at 133–237 (CAEIMRLLDD…TPSSVFEKVK (105 aa)). Kelch repeat units follow at residues 328–379 (FVFL…VIGR), 381–426 (VYAV…VLGN), and 428–473 (LYIT…NKCK).

In terms of assembly, homodimer. Interacts with CUL3.

It localises to the nucleus. It participates in protein modification; protein ubiquitination. Substrate-specific adapter for CUL3 E3 ubiquitin-protein ligase complex. The chain is Kelch-like protein 15 (KLHL15) from Gallus gallus (Chicken).